The sequence spans 768 residues: Probable beta-glucosidase M (768 aa).

An N-terminal signal peptide occupies residues 1-19; the sequence is MHAIAGLTGFLAGVSLSYA. N-linked (GlcNAc...) asparagine glycans are attached at residues asparagine 25, asparagine 72, and asparagine 259. The active site involves aspartate 287. N-linked (GlcNAc...) asparagine glycosylation is found at asparagine 315, asparagine 322, asparagine 394, asparagine 434, asparagine 472, asparagine 543, and asparagine 651.

This sequence belongs to the glycosyl hydrolase 3 family.

It is found in the secreted. The enzyme catalyses Hydrolysis of terminal, non-reducing beta-D-glucosyl residues with release of beta-D-glucose.. The protein operates within glycan metabolism; cellulose degradation. Functionally, beta-glucosidases are one of a number of cellulolytic enzymes involved in the degradation of cellulosic biomass. Catalyzes the last step releasing glucose from the inhibitory cellobiose. This Aspergillus flavus (strain ATCC 200026 / FGSC A1120 / IAM 13836 / NRRL 3357 / JCM 12722 / SRRC 167) protein is Probable beta-glucosidase M (bglM).